A 282-amino-acid chain; its full sequence is Bis(5'-nucleosyl)-tetraphosphatase, symmetrical (282 aa).

It belongs to the Ap4A hydrolase family.

It catalyses the reaction P(1),P(4)-bis(5'-adenosyl) tetraphosphate + H2O = 2 ADP + 2 H(+). In terms of biological role, hydrolyzes diadenosine 5',5'''-P1,P4-tetraphosphate to yield ADP. The protein is Bis(5'-nucleosyl)-tetraphosphatase, symmetrical of Escherichia fergusonii (strain ATCC 35469 / DSM 13698 / CCUG 18766 / IAM 14443 / JCM 21226 / LMG 7866 / NBRC 102419 / NCTC 12128 / CDC 0568-73).